The following is a 166-amino-acid chain: Ubiquitin-fold modifier-conjugating enzyme 1 (166 aa).

Cysteine 116 functions as the Glycyl thioester intermediate in the catalytic mechanism.

The protein belongs to the ubiquitin-conjugating enzyme family. UFC1 subfamily.

Its function is as follows. E2-like enzyme which forms an intermediate with UFM1 via a thioester linkage. This chain is Ubiquitin-fold modifier-conjugating enzyme 1, found in Monosiga brevicollis (Choanoflagellate).